The chain runs to 267 residues: Glucosamine-6-phosphate deaminase (267 aa).

Catalysis depends on Asp-72, which acts as the Proton acceptor; for enolization step. The For ring-opening step role is filled by Asp-141. Residue His-143 is the Proton acceptor; for ring-opening step of the active site. Glu-148 acts as the For ring-opening step in catalysis.

It belongs to the glucosamine/galactosamine-6-phosphate isomerase family. NagB subfamily. Homohexamer.

The enzyme catalyses alpha-D-glucosamine 6-phosphate + H2O = beta-D-fructose 6-phosphate + NH4(+). Its pathway is amino-sugar metabolism; N-acetylneuraminate degradation; D-fructose 6-phosphate from N-acetylneuraminate: step 5/5. With respect to regulation, allosterically activated by N-acetylglucosamine 6-phosphate (GlcNAc6P). Its function is as follows. Catalyzes the reversible isomerization-deamination of glucosamine 6-phosphate (GlcN6P) to form fructose 6-phosphate (Fru6P) and ammonium ion. This Actinobacillus pleuropneumoniae serotype 3 (strain JL03) protein is Glucosamine-6-phosphate deaminase.